The chain runs to 240 residues: MAPK-interacting and spindle-stabilizing protein-like (240 aa).

The disordered stretch occupies residues 1–240 (MSDEFSLADA…PMPGGPHSYH (240 aa)). S2 carries the N-acetylserine modification. 3 positions are modified to phosphoserine: S2, S6, and S15. Positions 16-26 (PAKTSAVSNTK) are enriched in polar residues. The span at 34–43 (WPGSNPWNNP) shows a compositional bias: low complexity. 4 stretches are compositionally biased toward pro residues: residues 44-66 (SAPPAVPSGLPPSATPSPVPFGP), 74-122 (SVPP…PELP), 159-185 (PNMPYPSPGPYPAPPPPQAPGAAPPVP), and 193-202 (AWGPPAPYPA).

Belongs to the MISS family.

The chain is MAPK-interacting and spindle-stabilizing protein-like (MAPK1IP1L) from Bos taurus (Bovine).